The sequence spans 407 residues: Tryptophan 2,3-dioxygenase B (407 aa).

Substrate-binding positions include 71 to 75 (FIVTH) and Arg143. Position 327 (His327) interacts with heme. Substrate is bound at residue Thr341.

The protein belongs to the tryptophan 2,3-dioxygenase family. As to quaternary structure, homotetramer. Dimer of dimers. The cofactor is heme.

The catalysed reaction is L-tryptophan + O2 = N-formyl-L-kynurenine. The protein operates within amino-acid degradation; L-tryptophan degradation via kynurenine pathway; L-kynurenine from L-tryptophan: step 1/2. In terms of biological role, heme-dependent dioxygenase that catalyzes the oxidative cleavage of the L-tryptophan (L-Trp) pyrrole ring and converts L-tryptophan to N-formyl-L-kynurenine. Catalyzes the oxidative cleavage of the indole moiety. The chain is Tryptophan 2,3-dioxygenase B from Danio rerio (Zebrafish).